The sequence spans 288 residues: Ankyrin repeat and SOCS box protein 8 (288 aa).

S17 bears the Phosphoserine mark. ANK repeat units follow at residues 52–81 (GTLK…EVNA), 85–113 (YNRT…NPNA), 117–146 (NRDT…SVNA), and 150–179 (NNDT…EVRV). The 54-residue stretch at 235–288 (QLCEKLTVLCSAPGTLKTLARYAVRRSLGLQYLPDAVKGLPLPASLKEYLLLLE) folds into the SOCS box domain.

Belongs to the ankyrin SOCS box (ASB) family. As to quaternary structure, interacts with TBK1; this interaction promotes TBK1 proteasomal degradation. In terms of processing, phosphorylated by TBK1.

Its subcellular location is the cytoplasm. It functions in the pathway protein modification; protein ubiquitination. Its function is as follows. May be a substrate-recognition component of a SCF-like ECS (Elongin-Cullin-SOCS-box protein) E3 ubiquitin-protein ligase complex which mediates the ubiquitination and subsequent proteasomal degradation of target proteins. Inhibits IFN-beta production through the IRF3 signaling pathway by targeting TBK1 via 'Lys-48'-linked ubiquitination, leading to its proteasomal degradation. This chain is Ankyrin repeat and SOCS box protein 8 (ASB8), found in Macaca fascicularis (Crab-eating macaque).